Here is a 460-residue protein sequence, read N- to C-terminus: Serine incorporator 5 (460 aa).

The Extracellular segment spans residues 1 to 36 (MCTPCCVSQLACCCGSAACSLCCGCCPKIKQSTSTR). Residues 37–57 (FMYALFFMLVTVTCVIMMSPT) traverse the membrane as a helical segment. The Cytoplasmic portion of the chain corresponds to 58-89 (VEMAMREHIPFYSQMCQQLNAGENCSTLVGYS). The chain crosses the membrane as a helical span at residues 90–110 (AVYKVCFGMACFFFFFAVFTI). Over 111–124 (RVQNSTGCRAAVHN) the chain is Extracellular. N114 carries N-linked (GlcNAc...) asparagine glycosylation. The helical transmembrane segment at 125 to 145 (GFWFFKFVALLACCAGGFFLP) threads the bilayer. The Cytoplasmic portion of the chain corresponds to 146–156 (NQDQFLEVWRY). A helical transmembrane segment spans residues 157 to 177 (VGAAGGFLFIIIQLMLLVQFA). Residues 178-197 (HRWNQNWSSGATYNKLWYAA) lie on the Extracellular side of the membrane. N183 is a glycosylation site (N-linked (GlcNAc...) asparagine). The helical transmembrane segment at 198–218 (LALVTLVLFSVAVGGMVFMFM) threads the bilayer. The Cytoplasmic portion of the chain corresponds to 219–230 (YYTHPEACFLNK). Residues 231–251 (IFLGVNGGLCFIVSLLAISPC) form a helical membrane-spanning segment. At 252–259 (IQTFQPTS) the chain is on the extracellular side. A helical membrane pass occupies residues 260-280 (GLLQPAVITLYVMYLTFSALA). The Cytoplasmic segment spans residues 281–311 (SKPIEMVEDEIKGNITVCVFPFKSGLKSDTN). The helical transmembrane segment at 312 to 332 (IVTGVGTAILFCCILYSCLIS) threads the bilayer. Topologically, residues 333–391 (TTKRSSAALQVYRNDMPENERARCCFCWVDDTEDYDDEKTSGGQNVKYDERDGTVYSYC) are extracellular. A helical membrane pass occupies residues 392 to 412 (FFHFVFFLGSLYVMMTVTNWF). Topologically, residues 413 to 433 (HYDNAKIERLLEGSWSVFWIK) are cytoplasmic. A helical transmembrane segment spans residues 434 to 454 (MASSWVCLFFYMWTLVVPMLF). At 455-460 (PQRFQA) the chain is on the extracellular side.

This sequence belongs to the TDE1 family.

It localises to the cell membrane. It carries out the reaction a 1,2-diacyl-sn-glycero-3-phospho-L-serine(in) = a 1,2-diacyl-sn-glycero-3-phospho-L-serine(out). The enzyme catalyses a 1,2-diacyl-sn-glycero-3-phosphocholine(in) = a 1,2-diacyl-sn-glycero-3-phosphocholine(out). It catalyses the reaction a 1,2-diacyl-sn-glycero-3-phosphoethanolamine(in) = a 1,2-diacyl-sn-glycero-3-phosphoethanolamine(out). Restriction factor required to restrict infectivity of gammaretroviruses: acts by inhibiting an early step of viral infection. Impairs the penetration of the viral particle into the cytoplasm. Non-ATP-dependent, non-specific lipid transporter for phosphatidylserine, phosphatidylcholine, and phosphatidylethanolamine. Functions as a scramblase that flips lipids in both directions across the membrane. Phospholipid scrambling results in gammaretroviral surface exposure of phosphatidylserine and loss of membrane asymmetry, which leads to loss of infectivity. Enhances the incorporation of serine into phosphatidylserine and sphingolipids. In Danio rerio (Zebrafish), this protein is Serine incorporator 5 (serinc5).